The following is a 477-amino-acid chain: MEEDTGALPRKENFSEWYNDILWRAEIMDVRYPVKGLYVWYPHGFGIRKRAYGVLRDLMDRDHAETMFPLLIPKTEFMKEAEHIKGFEDEVYWVTHGGRNELDVPLALRPTSETAIYPMYALWIRSHTDLPLRLYQVVNTFRYETKHTRPLIRLREITSFKEAHTVHATREEAAAQVETAIALYREFYDTLRVPVILSRRPAWDKFPGADYTIAADTIMPDGKTLQIGTVHMLGDHFSRTYAITYEDANGEQQYAYQTCYGISERSIAAVVSVHGDDKGLVLPPEVAPLEVVIVPIIVGKRRDEVLASAAALEAELRGAGFAVKLDARDMRPGAKYYHWEMRGVPLRVEVGPRDIDANTVVAVARTGKKTTLDRRGVVEGITSVLAEFGEDLSQAARQAMAARITAAETLEETAEAVKSGVAVVHWCGSQECAEKIEAAVDASIIGSDIRSDLIAVSDGPCVACGGEGTSALVARTY.

This sequence belongs to the class-II aminoacyl-tRNA synthetase family. ProS type 3 subfamily. Homodimer.

The protein resides in the cytoplasm. The catalysed reaction is tRNA(Pro) + L-proline + ATP = L-prolyl-tRNA(Pro) + AMP + diphosphate. In terms of biological role, catalyzes the attachment of proline to tRNA(Pro) in a two-step reaction: proline is first activated by ATP to form Pro-AMP and then transferred to the acceptor end of tRNA(Pro). This is Proline--tRNA ligase from Methanoculleus marisnigri (strain ATCC 35101 / DSM 1498 / JR1).